Here is a 180-residue protein sequence, read N- to C-terminus: Dephospho-CoA kinase (180 aa).

The 179-residue stretch at Val-2–Glu-180 folds into the DPCK domain. Gly-10–Thr-15 contacts ATP.

It belongs to the CoaE family.

The protein localises to the cytoplasm. The catalysed reaction is 3'-dephospho-CoA + ATP = ADP + CoA + H(+). Its pathway is cofactor biosynthesis; coenzyme A biosynthesis; CoA from (R)-pantothenate: step 5/5. Its function is as follows. Catalyzes the phosphorylation of the 3'-hydroxyl group of dephosphocoenzyme A to form coenzyme A. This Thermotoga maritima (strain ATCC 43589 / DSM 3109 / JCM 10099 / NBRC 100826 / MSB8) protein is Dephospho-CoA kinase.